The chain runs to 380 residues: Hydrogenase maturation factor HypD1 (380 aa).

Fe cation contacts are provided by C36, C64, and C67.

This sequence belongs to the HypD family. [4Fe-4S] cluster serves as cofactor.

The protein operates within protein modification; [NiFe] hydrogenase maturation. Involved in the maturation of [NiFe] hydrogenases. Involved in the biosynthesis of the Fe(CN)(2)CO cofactor. The polypeptide is Hydrogenase maturation factor HypD1 (hypD1) (Bradyrhizobium diazoefficiens (strain JCM 10833 / BCRC 13528 / IAM 13628 / NBRC 14792 / USDA 110)).